Consider the following 531-residue polypeptide: CCA tRNA nucleotidyltransferase, mitochondrial (531 aa).

This sequence belongs to the tRNA nucleotidyltransferase/poly(A) polymerase family.

It is found in the mitochondrion. Its subcellular location is the cytoplasm. The protein localises to the nucleus. It carries out the reaction a tRNA precursor + 2 CTP + ATP = a tRNA with a 3' CCA end + 3 diphosphate. Nucleotidyltransferase that catalyzes the addition and repair of the essential 3'-terminal CCA sequence in tRNAs, which is necessary for the attachment of amino acids to the 3' terminus of tRNA molecules, using CTP and ATP as substrates. tRNA 3'-terminal CCA addition is required both for tRNA processing and repair. Also involved in tRNA surveillance by mediating tandem CCA addition to generate a CCACCA at the 3' terminus of unstable tRNAs. While stable tRNAs receive only 3'-terminal CCA, unstable tRNAs are marked with CCACCA and rapidly degraded. The structural flexibility of RNA controls the choice between CCA versus CCACCA addition: following the first CCA addition cycle, nucleotide-binding to the active site triggers a clockwise screw motion, producing torque on the RNA. This ejects stable RNAs, whereas unstable RNAs are refolded while bound to the enzyme and subjected to a second CCA catalytic cycle. This Candida glabrata (strain ATCC 2001 / BCRC 20586 / JCM 3761 / NBRC 0622 / NRRL Y-65 / CBS 138) (Yeast) protein is CCA tRNA nucleotidyltransferase, mitochondrial (CCA1).